A 1006-amino-acid chain; its full sequence is D-2-hydroxyglutarate dehydrogenase (1006 aa).

Positions 47 to 279 constitute an FAD-binding PCMH-type domain; it reads YQRLPQAAVF…VEAKLNVLPI (233 aa). Positions 397 and 495 each coordinate (R)-2-hydroxyglutarate. One can recognise a 4Fe-4S ferredoxin-type domain in the interval 655 to 687; the sequence is SHEVYDAMAGCLACKSCAGQCPIKVNVPDFRSR. 4 residues coordinate [4Fe-4S] cluster: cysteine 665, cysteine 668, cysteine 671, and cysteine 675.

This sequence in the N-terminal section; belongs to the FAD-binding oxidoreductase/transferase type 4 family. Requires [4Fe-4S] cluster as cofactor. FAD is required as a cofactor.

The catalysed reaction is (R)-2-hydroxyglutarate + A = 2-oxoglutarate + AH2. The protein operates within amino-acid degradation. In terms of biological role, catalyzes the oxidation of D-2-hydroxyglutarate (D-2-HGA) to 2-oxoglutarate. Is involved in a D-lysine catabolic pathway. This Pseudomonas putida (strain ATCC 47054 / DSM 6125 / CFBP 8728 / NCIMB 11950 / KT2440) protein is D-2-hydroxyglutarate dehydrogenase.